Here is a 247-residue protein sequence, read N- to C-terminus: 4-nitrobenzoate reductase (247 aa).

Position 29–33 (29–33) interacts with FMN; the sequence is RRSVR. NADP(+) contacts are provided by S59, R112, Y120, and L126. R232 serves as a coordination point for FMN.

It belongs to the nitroreductase family. It depends on FMN as a cofactor.

It carries out the reaction 4-nitrobenzoate + 2 NADPH + 2 H(+) = 4-hydroxylaminobenzoate + 2 NADP(+) + H2O. Its function is as follows. Nitroreductase involved in the degradation of nitroaromatic compounds. Catalyzes the conversion of 4-nitrobenzoate to 4-hydroxylaminobenzoate. The chain is 4-nitrobenzoate reductase from Nocardioides sp. (strain LMS-CY).